A 335-amino-acid chain; its full sequence is Holliday junction branch migration complex subunit RuvB (335 aa).

Residues 2–184 (ADERIVSAEN…FGIVEHMAYY (183 aa)) are large ATPase domain (RuvB-L). ATP-binding positions include L23, R24, G65, K68, T69, T70, 131–133 (EDF), R174, Y184, and R221. T69 lines the Mg(2+) pocket. The segment at 185–255 (TEADLMDIVQ…IADHALSQLQ (71 aa)) is small ATPAse domain (RuvB-S). Positions 258–335 (IRGLDGVDRK…AHLGMPYPEK (78 aa)) are head domain (RuvB-H). 2 residues coordinate DNA: R313 and R318.

It belongs to the RuvB family. As to quaternary structure, homohexamer. Forms an RuvA(8)-RuvB(12)-Holliday junction (HJ) complex. HJ DNA is sandwiched between 2 RuvA tetramers; dsDNA enters through RuvA and exits via RuvB. An RuvB hexamer assembles on each DNA strand where it exits the tetramer. Each RuvB hexamer is contacted by two RuvA subunits (via domain III) on 2 adjacent RuvB subunits; this complex drives branch migration. In the full resolvosome a probable DNA-RuvA(4)-RuvB(12)-RuvC(2) complex forms which resolves the HJ.

It is found in the cytoplasm. The enzyme catalyses ATP + H2O = ADP + phosphate + H(+). Its function is as follows. The RuvA-RuvB-RuvC complex processes Holliday junction (HJ) DNA during genetic recombination and DNA repair, while the RuvA-RuvB complex plays an important role in the rescue of blocked DNA replication forks via replication fork reversal (RFR). RuvA specifically binds to HJ cruciform DNA, conferring on it an open structure. The RuvB hexamer acts as an ATP-dependent pump, pulling dsDNA into and through the RuvAB complex. RuvB forms 2 homohexamers on either side of HJ DNA bound by 1 or 2 RuvA tetramers; 4 subunits per hexamer contact DNA at a time. Coordinated motions by a converter formed by DNA-disengaged RuvB subunits stimulates ATP hydrolysis and nucleotide exchange. Immobilization of the converter enables RuvB to convert the ATP-contained energy into a lever motion, pulling 2 nucleotides of DNA out of the RuvA tetramer per ATP hydrolyzed, thus driving DNA branch migration. The RuvB motors rotate together with the DNA substrate, which together with the progressing nucleotide cycle form the mechanistic basis for DNA recombination by continuous HJ branch migration. Branch migration allows RuvC to scan DNA until it finds its consensus sequence, where it cleaves and resolves cruciform DNA. This Latilactobacillus sakei subsp. sakei (strain 23K) (Lactobacillus sakei subsp. sakei) protein is Holliday junction branch migration complex subunit RuvB.